Here is a 375-residue protein sequence, read N- to C-terminus: Growth/differentiation factor 8 (375 aa).

The signal sequence occupies residues 1–18 (MQKLQIFVYIYLFMLLVA). Residues 19–266 (GPVDLNENSE…VTDTPKRSRR (248 aa)) constitute a propeptide that is removed on maturation. 2 N-linked (GlcNAc...) asparagine glycosylation sites follow: asparagine 48 and asparagine 71. Intrachain disulfides connect cysteine 272–cysteine 282, cysteine 281–cysteine 340, cysteine 309–cysteine 372, and cysteine 313–cysteine 374.

It belongs to the TGF-beta family. Homodimer; disulfide-linked. Interacts with WFIKKN2, leading to inhibit its activity. Interacts with FSTL3. Synthesized as large precursor molecule that undergoes proteolytic cleavage to generate an N-terminal propeptide and a disulfide linked C-terminal dimer, which is the biologically active molecule. The circulating form consists of a latent complex of the C-terminal dimer and other proteins, including its propeptide, which maintain the C-terminal dimer in a latent, inactive state. Ligand activation requires additional cleavage of the prodomain by a tolloid-like metalloproteinase.

The protein localises to the secreted. Functionally, acts specifically as a negative regulator of skeletal muscle growth. The chain is Growth/differentiation factor 8 (MSTN) from Capra ibex (Ibex).